Here is a 472-residue protein sequence, read N- to C-terminus: Proline--tRNA ligase (472 aa).

It belongs to the class-II aminoacyl-tRNA synthetase family. ProS type 3 subfamily. Homodimer.

It localises to the cytoplasm. It carries out the reaction tRNA(Pro) + L-proline + ATP = L-prolyl-tRNA(Pro) + AMP + diphosphate. Functionally, catalyzes the attachment of proline to tRNA(Pro) in a two-step reaction: proline is first activated by ATP to form Pro-AMP and then transferred to the acceptor end of tRNA(Pro). The protein is Proline--tRNA ligase of Ureaplasma urealyticum serovar 10 (strain ATCC 33699 / Western).